A 97-amino-acid polypeptide reads, in one-letter code: UPF0416 protein RC0826 (97 aa).

A signal peptide spans 1-33 (MRIFVKAAISTAAWRFYAHPTVAMGICVGTALA).

The protein belongs to the UPF0416 family.

This chain is UPF0416 protein RC0826, found in Rickettsia conorii (strain ATCC VR-613 / Malish 7).